The primary structure comprises 201 residues: Holliday junction branch migration complex subunit RuvA (201 aa).

Residues 1–64 (MIGRLRGELV…EDAHVLYGFA (64 aa)) form a domain I region. Residues 65 to 143 (SESERALFRS…SLPAAVTLTG (79 aa)) are domain II. Residues 144–153 (GKPAAAAARA) are flexible linker. The interval 153–201 (APDPVSDAVSALVSLGYKPQEASRLISAVEGEAERSEDLIRLALKATLK) is domain III.

This sequence belongs to the RuvA family. As to quaternary structure, homotetramer. Forms an RuvA(8)-RuvB(12)-Holliday junction (HJ) complex. HJ DNA is sandwiched between 2 RuvA tetramers; dsDNA enters through RuvA and exits via RuvB. An RuvB hexamer assembles on each DNA strand where it exits the tetramer. Each RuvB hexamer is contacted by two RuvA subunits (via domain III) on 2 adjacent RuvB subunits; this complex drives branch migration. In the full resolvosome a probable DNA-RuvA(4)-RuvB(12)-RuvC(2) complex forms which resolves the HJ.

It localises to the cytoplasm. Its function is as follows. The RuvA-RuvB-RuvC complex processes Holliday junction (HJ) DNA during genetic recombination and DNA repair, while the RuvA-RuvB complex plays an important role in the rescue of blocked DNA replication forks via replication fork reversal (RFR). RuvA specifically binds to HJ cruciform DNA, conferring on it an open structure. The RuvB hexamer acts as an ATP-dependent pump, pulling dsDNA into and through the RuvAB complex. HJ branch migration allows RuvC to scan DNA until it finds its consensus sequence, where it cleaves and resolves the cruciform DNA. The chain is Holliday junction branch migration complex subunit RuvA from Thioalkalivibrio sulfidiphilus (strain HL-EbGR7).